The following is a 217-amino-acid chain: Lipid transferase CIDEA (217 aa).

Positions 33–110 (PARPFRVSNH…ILEKGQKWTP (78 aa)) constitute a CIDE-N domain. Positions 163–180 (CTSFKAVLRNLLRFMSYA) are amphipathic helix.

The protein belongs to the CIDE family. In terms of assembly, homodimer. Interacts with CIDEC. Directly interacts with CEBPB. Interacts with isoform CLSTN3beta of CLSTN3; inhibiting the lipid transferase activity of CIDEA. Highly expressed in brown adipose tissue and, at lower levels, in white adipose tissue (at protein level). Undetectable in undifferentiated preadipocytes. Expressed in mammary gland during pregnancy and lactation, in epithelial cells, but not in the surrounding adipose tissue. Secreted into milk via milk fat globules.

It is found in the lipid droplet. Its subcellular location is the nucleus. The catalysed reaction is a triacyl-sn-glycerol(in) = a triacyl-sn-glycerol(out). Its function is as follows. Lipid transferase that promotes unilocular lipid droplet formation by mediating lipid droplet fusion. Lipid droplet fusion promotes their enlargement, restricting lipolysis and favoring lipid storage. Localizes on the lipid droplet surface, at focal contact sites between lipid droplets, and mediates atypical lipid droplet fusion by promoting directional net neutral lipid transfer from the smaller to larger lipid droplets. The transfer direction may be driven by the internal pressure difference between the contacting lipid droplet pair and occurs at a lower rate than that promoted by CIDEC. May also act as a CEBPB coactivator in epithelial cells to control the expression of a subset of CEBPB downstream target genes, including ID2, IGF1, PRLR, SOCS1, SOCS3, XDH, but not casein. By interacting with CEBPB, strengthens the association of CEBPB with the XDH promoter, increases histone acetylation and dissociates HDAC1 from the promoter. When overexpressed, induces apoptosis; the physiological significance of its role in apoptosis is unclear. This chain is Lipid transferase CIDEA, found in Mus musculus (Mouse).